Reading from the N-terminus, the 375-residue chain is Alcohol dehydrogenase class-3 chain H (375 aa).

A1 carries the N-acetylalanine modification. Zn(2+) contacts are provided by C46, H68, C98, C101, C104, C112, and C175.

It belongs to the zinc-containing alcohol dehydrogenase family. Class-III subfamily. Homodimer or heterodimer with L chain. Requires Zn(2+) as cofactor.

It localises to the cytoplasm. It catalyses the reaction a primary alcohol + NAD(+) = an aldehyde + NADH + H(+). The catalysed reaction is a secondary alcohol + NAD(+) = a ketone + NADH + H(+). It carries out the reaction S-(hydroxymethyl)glutathione + NADP(+) = S-formylglutathione + NADPH + H(+). The enzyme catalyses S-(hydroxymethyl)glutathione + NAD(+) = S-formylglutathione + NADH + H(+). Class-III ADH is remarkably ineffective in oxidizing ethanol, but it readily catalyzes the oxidation of long-chain primary alcohols and the oxidation of S-(hydroxymethyl) glutathione. The polypeptide is Alcohol dehydrogenase class-3 chain H (Gadus morhua (Atlantic cod)).